Consider the following 476-residue polypeptide: Acyl-lipid omega-13 desaturase (476 aa).

The 66-residue stretch at 10–75 (GPALPSIPHQ…HLRVLERFRV (66 aa)) folds into the Cytochrome b5 heme-binding domain. Residues histidine 37 and histidine 60 each contribute to the heme site. 2 consecutive transmembrane segments (helical) span residues 146-166 (PFVILHCLHVVGLIWSMKLWW) and 168-188 (GAFISAFILPYFLWVLCAAMV). A Histidine box-1 motif is present at residues 189–193 (HDGGH). Residues 224 to 229 (HNILHH) carry the Histidine box-2 motif. Helical transmembrane passes span 267–287 (FFSHLIMYNFAHIGLTMISPL), 315–335 (YHSTVMLQLVTVGAFYITPFL), and 343–363 (LLLTLLPTFMMSVAFMVIAQV). The Histidine box-3 signature appears at 410 to 414 (QSLHH).

The protein belongs to the fatty acid desaturase type 1 family.

The protein resides in the membrane. The catalysed reaction is a (9Z,12Z)-octadecadienoyl-containing glycerolipid + 2 Fe(II)-[cytochrome b5] + O2 + 2 H(+) = a (5Z,9Z,12Z)-octadecatrienoyl-containing glycerolipid + 2 Fe(III)-[cytochrome b5] + 2 H2O. It carries out the reaction (9Z,12Z,15Z)-octadecatrienoyl-containing glycerolipid + 2 Fe(II)-[cytochrome b5] + O2 + 2 H(+) = a (5Z,9Z,12Z,15Z)-octadecatetraenoyl-containing glycerolipid + 2 Fe(III)-[cytochrome b5] + 2 H2O. The protein operates within lipid metabolism; polyunsaturated fatty acid biosynthesis. Functionally, front-end desaturase having a omega-13 desaturase activity for omega-9 unsaturated C18/C20 fatty acids. Strong substrate preferences for linoleic acid and alpha-linolenic acid for the production of pinolenic and coniferonic acids respectively. No desaturase activity for dihomo gamma-linolenic acid and eicosatertraenoic acid. This is Acyl-lipid omega-13 desaturase from Chlamydomonas reinhardtii (Chlamydomonas smithii).